A 629-amino-acid chain; its full sequence is tRNA uridine 5-carboxymethylaminomethyl modification enzyme MnmG (629 aa).

FAD is bound by residues 13-18 (GGGHAG), V125, and S180. 273–287 (GPRYCPSIEDKVMRF) is an NAD(+) binding site. Q370 is an FAD binding site.

It belongs to the MnmG family. In terms of assembly, homodimer. Heterotetramer of two MnmE and two MnmG subunits. The cofactor is FAD.

It is found in the cytoplasm. Its function is as follows. NAD-binding protein involved in the addition of a carboxymethylaminomethyl (cmnm) group at the wobble position (U34) of certain tRNAs, forming tRNA-cmnm(5)s(2)U34. The sequence is that of tRNA uridine 5-carboxymethylaminomethyl modification enzyme MnmG from Photobacterium profundum (strain SS9).